The following is a 207-amino-acid chain: Protein YABBY 6 (207 aa).

A C4-type zinc finger spans residues 16 to 43 (CNFCNTILAVSVPGNSMLNIVTVRCGHC).

The protein belongs to the YABBY family. In terms of tissue distribution, expressed in leaf blades, leaf sheaths and flowers.

It localises to the nucleus. This Oryza sativa subsp. japonica (Rice) protein is Protein YABBY 6 (YAB6).